We begin with the raw amino-acid sequence, 857 residues long: MAELRRDSTSSLQRKKPPWLKLDIPTAHVSVDEVPAFVPPVKRQGFHRSASMPVETSHFHSPQRDIIDHRRAAFQRQSSITQTIKRGTADWFGVSKDGDATQKWQRKSLRHCSLRYGKLKPQVIREMELPSQDNISLTSTETPPPLYVPSSQHGMQKIVDPLARGRAFRMVEEVDGYSVPQTPITPGAASICSFNSSRSGLNRIPRRRKRESVAKMSFRAAAALVKGRSLREGTLRRAHRRSFTPASFIEEDVVDFPDELDTSFFARDIMMHEEMSTFHDEVFESPSDSTMKDVDSKQLDESELTGSALDKSELEKSHLMLPLERGWRKVKEKTPAPPKIRLKQEVVSVNGQRRGQRIGLPVKKLFAREKRPYGLGMVGKLTNRTYRKRIDSYVKKQIEDMDDHRPFFTYWITFVHILITILAVCIYGIAPVGFSQHETVDSVLRNKGVYENVKFVQQENFWIGPSSEALIHLGAKFSPCMRRDNQVHELIKKKQELERNSACCVRNDRSGCLQTSEEECSSTLAVWVKWPQHPSVPQLDGVARQHGSVCHQDPRTCTEPASVSPHEWPDDITKWPICTKYNSGNHTNLPHIDCTITGRPCCIGTKGRCEITSREYCDFMKGYFHEEATLCSQVHCMDDVCGLLPFLNPEVPDQFYRLWLSLFLHAGILHCLVSVCFQMTILRDLEKLAGWLRISIIYILSGITGNLASAIFLPYRAEVGPAGSQFGILACLFVELIQSWQILAQPWRAFTKLLCVVLFLFAFGLLPWIDNFAHISGFISGFFLSFAFLPYISFGRLDMYRKRCQIIIFLVVFLGLFAGLVVLFYVHPIKCEWCELLTCIPFTDKFCEKYDLNAHLH.

At 1–413 (MAELRRDSTS…HRPFFTYWIT (413 aa)) the chain is on the cytoplasmic side. Residues 283 to 307 (FESPSDSTMKDVDSKQLDESELTGS) are disordered. Basic and acidic residues predominate over residues 290–300 (TMKDVDSKQLD). A helical transmembrane segment spans residues 414 to 434 (FVHILITILAVCIYGIAPVGF). Topologically, residues 435 to 661 (SQHETVDSVL…PDQFYRLWLS (227 aa)) are lumenal. An N-linked (GlcNAc...) asparagine glycan is attached at Asn-585. Residues 662–682 (LFLHAGILHCLVSVCFQMTIL) form a helical membrane-spanning segment. Residues 683 to 693 (RDLEKLAGWLR) are Cytoplasmic-facing. A helical transmembrane segment spans residues 694 to 714 (ISIIYILSGITGNLASAIFLP). Residues 715–716 (YR) are Lumenal-facing. Residues 717 to 737 (AEVGPAGSQFGILACLFVELI) traverse the membrane as a helical segment. The Cytoplasmic portion of the chain corresponds to 738–748 (QSWQILAQPWR). A helical membrane pass occupies residues 749-769 (AFTKLLCVVLFLFAFGLLPWI). Over 770-774 (DNFAH) the chain is Lumenal. The helical transmembrane segment at 775 to 795 (ISGFISGFFLSFAFLPYISFG) threads the bilayer. The Cytoplasmic segment spans residues 796–805 (RLDMYRKRCQ). The helical transmembrane segment at 806–826 (IIIFLVVFLGLFAGLVVLFYV) threads the bilayer. Topologically, residues 827–857 (HPIKCEWCELLTCIPFTDKFCEKYDLNAHLH) are lumenal.

It belongs to the peptidase S54 family.

The protein localises to the endoplasmic reticulum membrane. The protein resides in the golgi apparatus membrane. In terms of biological role, regulates ADAM17 protease, a sheddase of the epidermal growth factor (EGF) receptor ligands and TNF, thereby plays a role in sleep, cell survival, proliferation, migration and inflammation. Does not exhibit any protease activity on its own. The protein is Inactive rhomboid protein 1 (rhbdf1) of Danio rerio (Zebrafish).